The sequence spans 882 residues: DNA mismatch repair protein MutS (882 aa).

Residue 656–663 (GPNASGKS) coordinates ATP.

It belongs to the DNA mismatch repair MutS family.

In terms of biological role, this protein is involved in the repair of mismatches in DNA. It is possible that it carries out the mismatch recognition step. This protein has a weak ATPase activity. The protein is DNA mismatch repair protein MutS of Synechococcus sp. (strain ATCC 27144 / PCC 6301 / SAUG 1402/1) (Anacystis nidulans).